A 187-amino-acid polypeptide reads, in one-letter code: Glutathione peroxidase 7 (187 aa).

A signal peptide spans 1 to 19 (MVAATVAAAWLLLWAAACA). The active site involves Cys-57.

The protein belongs to the glutathione peroxidase family. As to expression, expressed in esophageal epithelial cells; expression is up-regulated after exposure to acidic bile acids.

It is found in the secreted. The catalysed reaction is 2 glutathione + H2O2 = glutathione disulfide + 2 H2O. Functionally, it protects esophageal epithelia from hydrogen peroxide-induced oxidative stress. It suppresses acidic bile acid-induced reactive oxygen species (ROS) and protects against oxidative DNA damage and double-strand breaks. The chain is Glutathione peroxidase 7 (GPX7) from Homo sapiens (Human).